A 119-amino-acid polypeptide reads, in one-letter code: Non-specific lipid-transfer protein 11 (119 aa).

Residues 1–28 (MRNITTTTRKMLLLVITILLGIAYHGEA) form the signal peptide. 4 cysteine pairs are disulfide-bonded: Cys31-Cys78, Cys41-Cys55, Cys56-Cys101, and Cys76-Cys115.

The protein belongs to the plant LTP family.

In terms of biological role, plant non-specific lipid-transfer proteins transfer phospholipids as well as galactolipids across membranes. May play a role in wax or cutin deposition in the cell walls of expanding epidermal cells and certain secretory tissues. This is Non-specific lipid-transfer protein 11 (LTP11) from Arabidopsis thaliana (Mouse-ear cress).